The primary structure comprises 414 residues: Multifunctional CCA protein (414 aa).

Residues Gly-8 and Arg-11 each coordinate ATP. 2 residues coordinate CTP: Gly-8 and Arg-11. Mg(2+) contacts are provided by Asp-21 and Asp-23. The ATP site is built by Arg-91, Arg-143, and Arg-146. Residues Arg-91, Arg-143, and Arg-146 each coordinate CTP. An HD domain is found at 232–333 (TGVHVMMVID…TRLVERCDAL (102 aa)).

This sequence belongs to the tRNA nucleotidyltransferase/poly(A) polymerase family. Bacterial CCA-adding enzyme type 1 subfamily. As to quaternary structure, monomer. Can also form homodimers and oligomers. Requires Mg(2+) as cofactor. Ni(2+) serves as cofactor.

The enzyme catalyses a tRNA precursor + 2 CTP + ATP = a tRNA with a 3' CCA end + 3 diphosphate. It catalyses the reaction a tRNA with a 3' CCA end + 2 CTP + ATP = a tRNA with a 3' CCACCA end + 3 diphosphate. Functionally, catalyzes the addition and repair of the essential 3'-terminal CCA sequence in tRNAs without using a nucleic acid template. Adds these three nucleotides in the order of C, C, and A to the tRNA nucleotide-73, using CTP and ATP as substrates and producing inorganic pyrophosphate. tRNA 3'-terminal CCA addition is required both for tRNA processing and repair. Also involved in tRNA surveillance by mediating tandem CCA addition to generate a CCACCA at the 3' terminus of unstable tRNAs. While stable tRNAs receive only 3'-terminal CCA, unstable tRNAs are marked with CCACCA and rapidly degraded. This chain is Multifunctional CCA protein, found in Cupriavidus metallidurans (strain ATCC 43123 / DSM 2839 / NBRC 102507 / CH34) (Ralstonia metallidurans).